Here is a 394-residue protein sequence, read N- to C-terminus: Phosphoglycerate kinase (394 aa).

Substrate-binding positions include 21–23 (DFN), R37, 60–63 (HLGR), R119, and R152. ATP contacts are provided by residues K202, G293, E324, and 350–353 (GGDS).

The protein belongs to the phosphoglycerate kinase family. As to quaternary structure, monomer.

Its subcellular location is the cytoplasm. The enzyme catalyses (2R)-3-phosphoglycerate + ATP = (2R)-3-phospho-glyceroyl phosphate + ADP. It functions in the pathway carbohydrate degradation; glycolysis; pyruvate from D-glyceraldehyde 3-phosphate: step 2/5. The protein is Phosphoglycerate kinase of Caldanaerobacter subterraneus subsp. tengcongensis (strain DSM 15242 / JCM 11007 / NBRC 100824 / MB4) (Thermoanaerobacter tengcongensis).